The chain runs to 107 residues: Ferredoxin (107 aa).

4Fe-4S ferredoxin-type domains follow at residues 8-37 (ERVV…LDEN) and 38-67 (GKSR…KASE). [4Fe-4S] cluster contacts are provided by Cys-17, Cys-20, and Cys-23. [3Fe-4S] cluster-binding residues include Cys-27, Cys-47, and Cys-53. Cys-57 is a [4Fe-4S] cluster binding site.

In terms of assembly, monomer. The cofactor is [4Fe-4S] cluster. [3Fe-4S] cluster is required as a cofactor. In terms of processing, the N-terminus is blocked.

Its function is as follows. Ferredoxins are iron-sulfur proteins that transfer electrons in a wide variety of metabolic reactions. This Pyrobaculum islandicum (strain DSM 4184 / JCM 9189 / GEO3) protein is Ferredoxin.